We begin with the raw amino-acid sequence, 174 residues long: Gamma-crystallin C (174 aa).

2 Beta/gamma crystallin 'Greek key' domains span residues 2–40 (GKITFFEDRSFQGRCYECSSDCPNLQTYFSRCNSVRVDS) and 41–83 (GCWM…RLIP). Cys-23 bears the S-methylcysteine mark. The interval 84-87 (HAGS) is connecting peptide. Beta/gamma crystallin 'Greek key' domains follow at residues 88–128 (HRMR…QVLE) and 129–171 (GCWV…RRVV).

Belongs to the beta/gamma-crystallin family.

Functionally, crystallins are the dominant structural components of the vertebrate eye lens. The chain is Gamma-crystallin C (Crygc) from Mus musculus (Mouse).